We begin with the raw amino-acid sequence, 256 residues long: Type III pantothenate kinase 1 (256 aa).

An ATP-binding site is contributed by 6–13; the sequence is DIGNSHIF. 107 to 110 is a substrate binding site; sequence GADR. Residue D109 is the Proton acceptor of the active site. D130 serves as a coordination point for K(+). T133 contributes to the ATP binding site. A substrate-binding site is contributed by T185.

It belongs to the type III pantothenate kinase family. In terms of assembly, homodimer. NH4(+) is required as a cofactor. K(+) serves as cofactor.

It localises to the cytoplasm. The catalysed reaction is (R)-pantothenate + ATP = (R)-4'-phosphopantothenate + ADP + H(+). Its pathway is cofactor biosynthesis; coenzyme A biosynthesis; CoA from (R)-pantothenate: step 1/5. Its function is as follows. Catalyzes the phosphorylation of pantothenate (Pan), the first step in CoA biosynthesis. The sequence is that of Type III pantothenate kinase 1 from Francisella tularensis subsp. holarctica (strain LVS).